The sequence spans 115 residues: Nucleoid-associated protein Pro_0020 (115 aa).

This sequence belongs to the YbaB/EbfC family. As to quaternary structure, homodimer.

The protein resides in the cytoplasm. It localises to the nucleoid. Its function is as follows. Binds to DNA and alters its conformation. May be involved in regulation of gene expression, nucleoid organization and DNA protection. The sequence is that of Nucleoid-associated protein Pro_0020 from Prochlorococcus marinus (strain SARG / CCMP1375 / SS120).